A 98-amino-acid chain; its full sequence is NADH-ubiquinone oxidoreductase chain 4L (98 aa).

3 helical membrane passes run 2–22 (TLTT…TLIF), 29–49 (TLLC…ITAL), and 61–81 (ITTL…LTMV).

Belongs to the complex I subunit 4L family. Core subunit of respiratory chain NADH dehydrogenase (Complex I) which is composed of 45 different subunits.

It is found in the mitochondrion inner membrane. The enzyme catalyses a ubiquinone + NADH + 5 H(+)(in) = a ubiquinol + NAD(+) + 4 H(+)(out). Functionally, core subunit of the mitochondrial membrane respiratory chain NADH dehydrogenase (Complex I) which catalyzes electron transfer from NADH through the respiratory chain, using ubiquinone as an electron acceptor. Part of the enzyme membrane arm which is embedded in the lipid bilayer and involved in proton translocation. This is NADH-ubiquinone oxidoreductase chain 4L (MT-ND4L) from Oxymycterus rufus (Red hocicudo).